Reading from the N-terminus, the 143-residue chain is Large ribosomal subunit protein uL11 (143 aa).

This sequence belongs to the universal ribosomal protein uL11 family. As to quaternary structure, part of the ribosomal stalk of the 50S ribosomal subunit. Interacts with L10 and the large rRNA to form the base of the stalk. L10 forms an elongated spine to which L12 dimers bind in a sequential fashion forming a multimeric L10(L12)X complex. Post-translationally, one or more lysine residues are methylated.

In terms of biological role, forms part of the ribosomal stalk which helps the ribosome interact with GTP-bound translation factors. The polypeptide is Large ribosomal subunit protein uL11 (Nitrosomonas eutropha (strain DSM 101675 / C91 / Nm57)).